We begin with the raw amino-acid sequence, 100 residues long: Urease subunit gamma (100 aa).

The protein belongs to the urease gamma subunit family. In terms of assembly, heterotrimer of UreA (gamma), UreB (beta) and UreC (alpha) subunits. Three heterotrimers associate to form the active enzyme.

It localises to the cytoplasm. The enzyme catalyses urea + 2 H2O + H(+) = hydrogencarbonate + 2 NH4(+). Its pathway is nitrogen metabolism; urea degradation; CO(2) and NH(3) from urea (urease route): step 1/1. The polypeptide is Urease subunit gamma (Pseudomonas putida (strain ATCC 700007 / DSM 6899 / JCM 31910 / BCRC 17059 / LMG 24140 / F1)).